The primary structure comprises 340 residues: Proline-rich transmembrane protein 2 (340 aa).

The tract at residues 1-261 is disordered; the sequence is MAASSSEISE…AGPGVEGGEG (261 aa). Over 1–268 the chain is Cytoplasmic; that stretch reads MAASSSEISE…GEGTQKPRDY (268 aa). The segment covering 9-18 has biased composition (basic and acidic residues); the sequence is SEMKGVEESP. S28 bears the Phosphoserine mark. Position 74 is a phosphothreonine (T74). Pro residues-rich tracts occupy residues 131 to 155 and 197 to 207; these read PPEPAPEPAPQPDPRPDSQPTPKPA and APEPHSPPSKK. Phosphoserine is present on S238. At R240 the chain carries Omega-N-methylarginine. A phosphoserine mark is found at S248 and S249. The segment at residues 269 to 289 is an intramembrane region (helical); that stretch reads IILAILSCFCPMWPVNIVAFA. Residues 290–317 lie on the Cytoplasmic side of the membrane; the sequence is YAVMSRNSLQQGDVDGAQRLGRVAKLLS. The chain crosses the membrane as a helical span at residues 318–338; that stretch reads IVALVGGVLIIIASCVINLGV. The Extracellular segment spans residues 339 to 340; sequence YK.

Belongs to the CD225/Dispanin family. In terms of assembly, component of the outer core of AMPAR complex. AMPAR complex consists of an inner core made of 4 pore-forming GluA/GRIA proteins (GRIA1, GRIA2, GRIA3 and GRIA4) and 4 major auxiliary subunits arranged in a twofold symmetry. One of the two pairs of distinct binding sites is occupied either by CNIH2, CNIH3 or CACNG2, CACNG3. The other harbors CACNG2, CACNG3, CACNG4, CACNG8 or GSG1L. This inner core of AMPAR complex is complemented by outer core constituents binding directly to the GluA/GRIA proteins at sites distinct from the interaction sites of the inner core constituents. Outer core constituents include at least PRRT1, PRRT2, CKAMP44/SHISA9, FRRS1L and NRN1. The proteins of the inner and outer core serve as a platform for other, more peripherally associated AMPAR constituents. Alone or in combination, these auxiliary subunits control the gating and pharmacology of the AMPAR complex and profoundly impact their biogenesis and protein processing. Interacts with intersectin 1/ITSN1. Interacts with SNARE complex components, including SNAP25, STX1A, SYT1 and SYT2; this interaction may inhibit SNARE complex formation.

It is found in the cell membrane. The protein localises to the presynaptic cell membrane. The protein resides in the synapse. It localises to the cell projection. Its subcellular location is the axon. It is found in the cytoplasmic vesicle. The protein localises to the secretory vesicle. The protein resides in the synaptic vesicle membrane. It localises to the postsynaptic density membrane. Its subcellular location is the dendritic spine. Functionally, as a component of the outer core of AMPAR complex, may be involved in synaptic transmission in the central nervous system. In hippocampal neurons, in presynaptic terminals, plays an important role in the final steps of neurotransmitter release, possibly by regulating Ca(2+)-sensing. In the cerebellum, may inhibit SNARE complex formation and down-regulate short-term facilitation. The chain is Proline-rich transmembrane protein 2 (PRRT2) from Homo sapiens (Human).